The sequence spans 191 residues: Protein YceI (191 aa).

A signal peptide spans 1 to 22 (MKKNLLGFTLASLLFTTGSAVA).

This sequence belongs to the UPF0312 family. Type 1 subfamily.

Its subcellular location is the periplasm. This Salmonella newport (strain SL254) protein is Protein YceI.